A 451-amino-acid polypeptide reads, in one-letter code: MVCLALVRAAYEHIYLVRKVSHACRCHQHRAWSSKPAASQSAVQGAPGSVLEILGKSYPQDDHTNLTQKVLSKVGRNLHNQKFHPLWLIKERVKEHFYQQYMVRSRTPLFSVYDQLPPVVTTWQNFDSLLIPADHPSRKKGDNYYLNRAHMLRAHTSAHQWDLLHAGLNAFLVVGDVYRRDQIDCQHYPVFHQLEGVRLFSKHELFAGVKDGESLQLFEEGSRSAHKQETHTMEAVKLVEFDLKQVLTRLVTHLFGDGLEVRWVDCYFPFTHPSFEMEINFRGEWLEVLGCGVMEQQLVNSAGAQDRIGWAFGLGLERLAMVLYDIPDIRLFWSEDERFLKQFLLSDINQSVKFQPLSKYPAVFNDISFWLPSENYTENDFYDIVRTVGGDLVEKVDLIDKFEHPKTHRTSHCYRITYRHMERTLSQREVGNVHQAVQEAAVQLLGVEGRF.

Substrate contacts are provided by residues 157-160, arginine 179, 186-188, and 193-195; these read SAHQ, QHY, and QLE. Position 202 is an N6-acetyllysine (lysine 202). Residues glutamate 287 and phenylalanine 312 each coordinate substrate. The FDX-ACB domain occupies 358-450; it reads SKYPAVFNDI…AVQLLGVEGR (93 aa).

This sequence belongs to the class-II aminoacyl-tRNA synthetase family. As to quaternary structure, monomer.

Its subcellular location is the mitochondrion matrix. It localises to the mitochondrion. The catalysed reaction is tRNA(Phe) + L-phenylalanine + ATP = L-phenylalanyl-tRNA(Phe) + AMP + diphosphate + H(+). In terms of biological role, is responsible for the charging of tRNA(Phe) with phenylalanine in mitochondrial translation. To a lesser extent, also catalyzes direct attachment of m-Tyr (an oxidized version of Phe) to tRNA(Phe), thereby opening the way for delivery of the misacylated tRNA to the ribosome and incorporation of ROS-damaged amino acid into proteins. The protein is Phenylalanine--tRNA ligase, mitochondrial (Fars2) of Mus musculus (Mouse).